Consider the following 642-residue polypeptide: MLLTHTSSRWRTAAVCALAATASWLPSVQAAEKTQADYFVSSLPGAPEGPLLKMHAGHIEVDAEHNSNLFFWHYENRHIADRQRTVLWLNGGPGCSSMDGAMMEIGPYRVKHGGHLEYNNGSWDEFANMLFIDQPVGTGFSYVNTDSYLTDLDQMAEHMMIFLEKWFKLFPEYENDDLYIAGESYAGQHIPYIARAILNRNKNQNTDPKPWNLKGLLIGNGWISPADQYLAYLPFAYQNGMIQADSDSAKRVEQQQSICIQKLQDGGHDKVDTSECEQIMVAILEETKDRKADRMNQCLNMYDIRLRDDSSCGMNWPPDLTDVTPYLRRPDVIKALHINSDKKTGWSECNGAVSGHFRAKNSVPTVKFLPELLTEVPILLFSGDKDFICNHVGTEAMIENMSWNGGKGWEVSPGVWAPKQDWTFEGEPAGTYQEVRNLTYVVFYNSSHMVPFDYPKRTRDMLDRFMNVDISAIGGDPADSRIDGEKGPLTSVGDHPNSTKAEEDKAQQLKEAEWKAYYRSGEVVLVILIIVACLWGAFLWRTRRSTSLYKGVDGDEGRESLLTGMGLDNFRRGARRHDVEAADFDERELDDLDDAPKKPANGYSNVNSEKERQPHNDSTFSLGADSDDEAEGSERGRRKEHS.

A signal peptide spans 1-30; sequence MLLTHTSSRWRTAAVCALAATASWLPSVQA. The Lumenal segment spans residues 31–519; that stretch reads AEKTQADYFV…KEAEWKAYYR (489 aa). The N-linked (GlcNAc...) asparagine glycan is linked to Asn120. Active-site residues include Ser184 and Asp386. 3 N-linked (GlcNAc...) asparagine glycosylation sites follow: Asn400, Asn437, and Asn445. His448 is an active-site residue. Residues 476 to 500 are disordered; sequence DPADSRIDGEKGPLTSVGDHPNSTK. The N-linked (GlcNAc...) asparagine glycan is linked to Asn497. Residues 520–540 form a helical membrane-spanning segment; sequence SGEVVLVILIIVACLWGAFLW. At 541 to 642 the chain is on the cytoplasmic side; it reads RTRRSTSLYK…SERGRRKEHS (102 aa). The segment at 586–642 is disordered; the sequence is ERELDDLDDAPKKPANGYSNVNSEKERQPHNDSTFSLGADSDDEAEGSERGRRKEHS. Over residues 632–642 the composition is skewed to basic and acidic residues; it reads GSERGRRKEHS.

This sequence belongs to the peptidase S10 family.

It localises to the golgi apparatus. It is found in the trans-Golgi network membrane. The enzyme catalyses Preferential release of a C-terminal arginine or lysine residue.. In terms of biological role, protease with a carboxypeptidase B-like function involved in the C-terminal processing of the lysine and arginine residues from protein precursors. Promotes cell fusion and is involved in the programmed cell death. This Phaeosphaeria nodorum (strain SN15 / ATCC MYA-4574 / FGSC 10173) (Glume blotch fungus) protein is Pheromone-processing carboxypeptidase KEX1 (KEX1).